A 77-amino-acid chain; its full sequence is Conotoxin Ar5.1 a (77 aa).

An N-terminal signal peptide occupies residues 1–19 (MLCLPVFIILLLLASPAAS). Residues 20-44 (NPLETRIQSDLIRAALEDADMKNEK) constitute a propeptide that is removed on maturation.

The protein belongs to the conotoxin T superfamily. In terms of processing, contains 2 disulfide bonds that can be either 'C1-C3, C2-C4' or 'C1-C4, C2-C3', since these disulfide connectivities have been observed for conotoxins with cysteine framework V (for examples, see AC P0DQQ7 and AC P81755). As to expression, expressed by the venom duct.

Its subcellular location is the secreted. The protein is Conotoxin Ar5.1 a of Conus arenatus (Sand-dusted cone).